The chain runs to 129 residues: Transcription antitermination protein NusB (129 aa).

It belongs to the NusB family.

In terms of biological role, involved in transcription antitermination. Required for transcription of ribosomal RNA (rRNA) genes. Binds specifically to the boxA antiterminator sequence of the ribosomal RNA (rrn) operons. This chain is Transcription antitermination protein NusB, found in Staphylococcus aureus (strain USA300 / TCH1516).